The chain runs to 321 residues: Cytochrome c biogenesis protein CcsA (321 aa).

Helical transmembrane passes span 17-37, 43-63, 71-91, 143-163, 225-245, 258-273, and 286-306; these read IISI…IVGL, KGMI…WIYS, LYES…VPKI, MLLS…LLVI, VISL…VWAN, ETWA…IYLH, and AIVA…VNLL.

It belongs to the CcmF/CycK/Ccl1/NrfE/CcsA family. In terms of assembly, may interact with Ccs1.

It is found in the plastid. It localises to the chloroplast thylakoid membrane. Required during biogenesis of c-type cytochromes (cytochrome c6 and cytochrome f) at the step of heme attachment. The polypeptide is Cytochrome c biogenesis protein CcsA (Liriodendron tulipifera (Tuliptree)).